The following is a 131-amino-acid chain: Large ribosomal subunit protein bL17 (131 aa).

This sequence belongs to the bacterial ribosomal protein bL17 family. In terms of assembly, part of the 50S ribosomal subunit. Contacts protein L32.

The sequence is that of Large ribosomal subunit protein bL17 from Shewanella oneidensis (strain ATCC 700550 / JCM 31522 / CIP 106686 / LMG 19005 / NCIMB 14063 / MR-1).